Here is a 694-residue protein sequence, read N- to C-terminus: Potassium-transporting ATPase ATP-binding subunit (694 aa).

Helical transmembrane passes span 36 to 56 (VMFV…RDLI), 62 to 82 (LAFS…ANFA), 218 to 238 (IALN…TATI), and 249 to 269 (IPII…IGAL). D306 functions as the 4-aspartylphosphate intermediate in the catalytic mechanism. ATP-binding positions include D343, E347, 376 to 383 (FTAQTRMS), and K394. Positions 530 and 534 each coordinate Mg(2+). Transmembrane regions (helical) follow at residues 600–620 (FAII…LNVM), 628–648 (AILS…PLSL), and 666–686 (LVIY…LIDL).

The protein belongs to the cation transport ATPase (P-type) (TC 3.A.3) family. Type IA subfamily. In terms of assembly, the system is composed of three essential subunits: KdpA, KdpB and KdpC.

Its subcellular location is the cell inner membrane. The enzyme catalyses K(+)(out) + ATP + H2O = K(+)(in) + ADP + phosphate + H(+). Part of the high-affinity ATP-driven potassium transport (or Kdp) system, which catalyzes the hydrolysis of ATP coupled with the electrogenic transport of potassium into the cytoplasm. This subunit is responsible for energy coupling to the transport system and for the release of the potassium ions to the cytoplasm. The sequence is that of Potassium-transporting ATPase ATP-binding subunit from Agrobacterium fabrum (strain C58 / ATCC 33970) (Agrobacterium tumefaciens (strain C58)).